The following is a 661-amino-acid chain: Putative DUF21 domain-containing protein At3g13070, chloroplastic (661 aa).

The transit peptide at 1 to 71 directs the protein to the chloroplast; it reads MMGMALELSV…RSCEFSYRSR (71 aa). 5 consecutive transmembrane segments (helical) span residues 105-125, 162-182, 213-233, 239-259, and 285-305; these read GIVIGALVCGVFLYGCQKVLA, GLILAALLSLSAFFSMAETSI, FLTTILIGTTVVNIAATALVT, IFGEAGVSAATGLMTVAILLL, and WLSLVLYPVGRIVTYLSMGIL. The region spanning 154–340 is the CNNM transmembrane domain; it reads VLTVLREQGL…ELSGAIEEEE (187 aa). CBS domains are found at residues 359–420 and 426–484; these read MTPL…LLES and MAHK…IFDE. 2 disordered regions span residues 559–578 and 628–661; these read ESWEEDGEEEEGKQERQEPK and SSEEDDGNLSNEEDQSENAVLDEHVLADNSKKQQ. 2 stretches are compositionally biased toward acidic residues: residues 560–570 and 630–643; these read SWEEDGEEEEG and EEDDGNLSNEEDQS. The span at 648–661 shows a compositional bias: basic and acidic residues; that stretch reads LDEHVLADNSKKQQ.

It localises to the plastid. Its subcellular location is the chloroplast membrane. In Arabidopsis thaliana (Mouse-ear cress), this protein is Putative DUF21 domain-containing protein At3g13070, chloroplastic (CBSDUFCH1).